The following is a 966-amino-acid chain: Mitogen-activated protein kinase kinase kinase 13 (966 aa).

A disordered region spans residues 1–59 (MANPQEHLSCSSSPRLPLSENKTFNGLQDDLAPMGSHASPKLLKDQQEKGMVQTELAEG). Residues 8-19 (LSCSSSPRLPLS) are compositionally biased toward low complexity. Residues 168 to 409 (ISELQWLGSG…FRQTLMHLDI (242 aa)) enclose the Protein kinase domain. ATP-binding positions include 174 to 182 (LGSGAQGAV) and lysine 195. Catalysis depends on aspartate 279, which acts as the Proton acceptor. 2 leucine-zipper regions span residues 433-454 (VKKH…DEEL) and 486-507 (LSAI…EQAV). The stretch at 457-496 (RRREELRHALDIREHYERKLERANNLYMELSAIMLQLEMR) forms a coiled coil. 3 disordered regions span residues 561-663 (EVAP…GQDI), 743-874 (LDVP…DELA), and 937-966 (QFEE…SATW). Over residues 567–581 (SPLSGSPKLSSSSSK) the composition is skewed to low complexity. Residues 582 to 594 (SRYRSKPRHRRGN) show a composition bias toward basic residues. Residues 609 to 622 (QPAQEDSPHPTSLH) are compositionally biased toward polar residues. A compositionally biased stretch (low complexity) spans 629–642 (PSSQHHNLLQQQYQ). Over residues 814 to 827 (DSSEEEEGEVDSEV) the composition is skewed to acidic residues. An acidic region spans residues 815–828 (SSEEEEGEVDSEVE). Polar residues predominate over residues 840-855 (SSCQSYSTFSSENFSV). Residues 939–950 (EESDCDSSDGEC) show a composition bias toward acidic residues. Positions 954 to 966 (TVRTNKHYSSATW) are enriched in polar residues.

The protein belongs to the protein kinase superfamily. Ser/Thr protein kinase family. Homodimer; forms dimers through the leucine-zipper motif. Interacts with the C-terminus of MAPK8IP1 through the kinase catalytic domain. Binds PRDX3. Associates with the IKK complex through the kinase domain. Mg(2+) is required as a cofactor. In terms of processing, autophosphorylated on serine and threonine residues.

It is found in the cytoplasm. The protein localises to the membrane. It carries out the reaction L-seryl-[protein] + ATP = O-phospho-L-seryl-[protein] + ADP + H(+). It catalyses the reaction L-threonyl-[protein] + ATP = O-phospho-L-threonyl-[protein] + ADP + H(+). Its activity is regulated as follows. Activated by autophosphorylation and homodimerization. In terms of biological role, activates the JUN N-terminal pathway through activation of the MAP kinase kinase MAP2K7. Acts synergistically with PRDX3 to regulate the activation of NF-kappa-B in the cytosol. This activation is kinase-dependent and involves activating the IKK complex, the IKBKB-containing complex that phosphorylates inhibitors of NF-kappa-B. This Bos taurus (Bovine) protein is Mitogen-activated protein kinase kinase kinase 13 (MAP3K13).